A 354-amino-acid chain; its full sequence is Dihydroorotate dehydrogenase (quinone) (354 aa).

FMN-binding positions include 61 to 65 (AGYDK) and A85. K65 serves as a coordination point for substrate. 110 to 114 (NRFGF) contacts substrate. FMN is bound by residues N139 and N170. N170 lines the substrate pocket. Residue S173 is the Nucleophile of the active site. N175 provides a ligand contact to substrate. Residues K211 and T239 each contribute to the FMN site. 240 to 241 (NT) contributes to the substrate binding site. Residues G261, G290, and 311–312 (YT) contribute to the FMN site.

Belongs to the dihydroorotate dehydrogenase family. Type 2 subfamily. Monomer. It depends on FMN as a cofactor.

It is found in the cell membrane. The enzyme catalyses (S)-dihydroorotate + a quinone = orotate + a quinol. It participates in pyrimidine metabolism; UMP biosynthesis via de novo pathway; orotate from (S)-dihydroorotate (quinone route): step 1/1. Its function is as follows. Catalyzes the conversion of dihydroorotate to orotate with quinone as electron acceptor. The chain is Dihydroorotate dehydrogenase (quinone) from Cereibacter sphaeroides (strain KD131 / KCTC 12085) (Rhodobacter sphaeroides).